Reading from the N-terminus, the 555-residue chain is Intraflagellar transport protein 56 (555 aa).

3 TPR repeats span residues 57–90 (LKNL…EDPD), 151–184 (IEDQ…HRDY), and 393–426 (DDFN…KYRN).

The protein belongs to the IFT56 family. As to quaternary structure, component of the IFT complex B.

It localises to the cell projection. The protein localises to the cilium. It is found in the flagellum. Functionally, component of the intraflagellar transport (IFT) complex B required for transport of proteins in the motile cilium. Required for transport of specific ciliary cargo proteins related to motility, while it is neither required for IFT complex B assembly or motion nor for cilium assembly. The sequence is that of Intraflagellar transport protein 56 from Chlamydomonas reinhardtii (Chlamydomonas smithii).